Consider the following 1401-residue polypeptide: Uveal autoantigen with coiled-coil domains and ankyrin repeats protein (1401 aa).

6 ANK repeats span residues L25 to V53, E54 to T83, A87 to H116, Q120 to A149, D153 to S182, and Q186 to L215. S265 carries the post-translational modification Phosphoserine. Coiled-coil stretches lie at residues T273 to K361, E423 to Y827, and A856 to I1368. K1020 participates in a covalent cross-link: Glycyl lysine isopeptide (Lys-Gly) (interchain with G-Cter in SUMO2).

As to quaternary structure, component of the apoptosome complex, composed of APAF1, pro-caspase-9 and UACA. In the complex, it probably interacts directly with APAF1. Interacts with LGALS3. Interacts with ARF6 and ACTB. Interacts with RAB39A. In terms of tissue distribution, highly expressed in muscle and heart, moderately in liver, kidney and pancreas, and weakly in placenta and lung.

Its subcellular location is the nucleus. The protein localises to the cytoplasm. It is found in the cytoskeleton. Regulates APAF1 expression and plays an important role in the regulation of stress-induced apoptosis. Promotes apoptosis by regulating three pathways, apoptosome up-regulation, LGALS3/galectin-3 down-regulation and NF-kappa-B inactivation. Regulates the redistribution of APAF1 into the nucleus after proapoptotic stress. Down-regulates the expression of LGALS3 by inhibiting NFKB1. Functionally, modulates isoactin dynamics to regulate the morphological alterations required for cell growth and motility. Interaction with ARF6 may modulate cell shape and motility after injury. May be involved in multiple neurite formation. The sequence is that of Uveal autoantigen with coiled-coil domains and ankyrin repeats protein (UACA) from Bos taurus (Bovine).